A 127-amino-acid polypeptide reads, in one-letter code: Large ribosomal subunit protein bL17 (127 aa).

It belongs to the bacterial ribosomal protein bL17 family. In terms of assembly, part of the 50S ribosomal subunit. Contacts protein L32.

The protein is Large ribosomal subunit protein bL17 of Mannheimia succiniciproducens (strain KCTC 0769BP / MBEL55E).